A 1156-amino-acid polypeptide reads, in one-letter code: GPI inositol-deacylase (1156 aa).

The interval 1–95 is disordered; sequence MHRRSSGSPV…AMATASTETK (95 aa). Polar residues-rich tracts occupy residues 20–37 and 61–72; these read VSRSPTESTAHGPNNNAF and GASTPRSRNSGL. Low complexity predominate over residues 75 to 95; sequence TPSSSSTSSTTAMATASTETK. The helical transmembrane segment at 131 to 151 threads the bilayer; sequence TCSILTALTTLVASVFLFFIV. Residue serine 318 is part of the active site. A run of 2 helical transmembrane segments spans residues 797–817 and 845–865; these read LVMRYRTVFAAFPLLVVALVL and FPILLLAMSLLASSLATSAQI. A glycan (N-linked (GlcNAc...) asparagine) is linked at asparagine 877. 2 helical membrane passes run 897–917 and 966–986; these read AFFWFLVPVFGLISVGVCVIL and ILLVLVSTLIPYQFAYMVACI. Asparagine 1009 carries an N-linked (GlcNAc...) asparagine glycan. Helical transmembrane passes span 1016–1036, 1053–1073, 1081–1101, and 1102–1122; these read SIFILMLWILPINILVLLVWA, VLSIMPFILLVETMTSGAMIP, HVTSMILFAIAVYSAVYGVSY, and AYLLHHLANILAAWFVVIYFF.

Belongs to the GPI inositol-deacylase family.

The protein resides in the endoplasmic reticulum membrane. Involved in inositol deacylation of GPI-anchored proteins which plays important roles in the quality control and ER-associated degradation of GPI-anchored proteins. This is GPI inositol-deacylase (bst1) from Aspergillus fumigatus (strain ATCC MYA-4609 / CBS 101355 / FGSC A1100 / Af293) (Neosartorya fumigata).